The primary structure comprises 607 residues: Guanine nucleotide-binding protein-like 1 (607 aa).

Over residues M1–K14 the composition is skewed to basic residues. A disordered region spans residues M1–Y81. Over residues Q15–L26 the composition is skewed to basic and acidic residues. S32, S33, and S34 each carry phosphoserine. T48 and T50 each carry phosphothreonine. Phosphoserine is present on residues S51 and S68. The region spanning W178–P418 is the CP-type G domain. N225 to D228 provides a ligand contact to GTP. S324 carries the post-translational modification Phosphoserine. Residues G367–S374 and D411–L415 contribute to the GTP site. The interval G547–C607 is disordered. Acidic residues predominate over residues G550 to T584. Residues S561, S562, and S563 each carry the phosphoserine modification.

It belongs to the TRAFAC class YlqF/YawG GTPase family.

In terms of biological role, possible regulatory or functional link with the histocompatibility cluster. The chain is Guanine nucleotide-binding protein-like 1 (GNL1) from Pongo abelii (Sumatran orangutan).